The sequence spans 809 residues: WASP homolog-associated protein with actin, membranes and microtubules (809 aa).

The tract at residues Met1 to Ile260 is mediates association with membranes. Residues Leu261–Ser630 are mediates interaction with microtubules. Coiled coils occupy residues Pro271–Ile298, Glu384–Arg479, and Ser512–Leu542. 4 disordered regions span residues Tyr506–Lys528, Lys546–Leu571, Ile586–Cys612, and Gln627–Pro707. The span at Met515 to Lys528 shows a compositional bias: basic and acidic residues. Residue Ser606 is modified to Phosphoserine. The segment at Lys631–Gly809 is mediates actin nucleation. Positions Leu638–Leu659 are enriched in pro residues. The segment covering Leu662–Asn673 has biased composition (polar residues). 2 consecutive WH2 domains span residues Ser709 to Val727 and Ile739 to Val756. The tract at residues Lys754–Gly809 is disordered. Residues Asn763–Arg772 are compositionally biased toward polar residues. Residues Ser770–Glu797 adopt a coiled-coil conformation. Residues Asp794–Asp803 are compositionally biased toward acidic residues. Ser795 carries the post-translational modification Phosphoserine.

As to quaternary structure, interacts with ACTR3; indicative for an association with the ARP2/3 complex. Associates with microtubules; in vitro binds to tubulin heterodimer in a 1:1 stoichiometry; decorates microtubules with a repeat of 80 A along protofilaments. Interacts with RHOD (in GTP-bound form). In terms of tissue distribution, expressed in brain, lung, heart, colon and kidney (at protein level).

Its subcellular location is the cytoplasm. The protein resides in the endoplasmic reticulum-Golgi intermediate compartment. The protein localises to the cytoplasmic vesicle membrane. It is found in the golgi apparatus. It localises to the cis-Golgi network. In terms of biological role, acts as a nucleation-promoting factor (NPF) that stimulates Arp2/3-mediated actin polymerization both at the Golgi apparatus and along tubular membranes. Its activity in membrane tubulation requires F-actin and interaction with microtubules. Proposed to use coordinated actin-nucleating and microtubule-binding activities of distinct WHAMM molecules to drive membrane tubule elongation; when MT-bound can recruit and remodel membrane vesicles but is prevented to activate the Arp2/3 complex. Involved as a regulator of Golgi positioning and morphology. Participates in vesicle transport between the reticulum endoplasmic and the Golgi complex. Required for RhoD-dependent actin reorganization such as in cell adhesion and cell migration. This chain is WASP homolog-associated protein with actin, membranes and microtubules (WHAMM), found in Homo sapiens (Human).